We begin with the raw amino-acid sequence, 299 residues long: Lipoyl synthase (299 aa).

[4Fe-4S] cluster is bound by residues Cys34, Cys39, Cys45, Cys60, Cys64, Cys67, and Ser273. One can recognise a Radical SAM core domain in the interval 46 to 262 (WNKKHATVMI…KYVAYSKGFL (217 aa)).

The protein belongs to the radical SAM superfamily. Lipoyl synthase family. [4Fe-4S] cluster is required as a cofactor.

It localises to the cytoplasm. The catalysed reaction is [[Fe-S] cluster scaffold protein carrying a second [4Fe-4S](2+) cluster] + N(6)-octanoyl-L-lysyl-[protein] + 2 oxidized [2Fe-2S]-[ferredoxin] + 2 S-adenosyl-L-methionine + 4 H(+) = [[Fe-S] cluster scaffold protein] + N(6)-[(R)-dihydrolipoyl]-L-lysyl-[protein] + 4 Fe(3+) + 2 hydrogen sulfide + 2 5'-deoxyadenosine + 2 L-methionine + 2 reduced [2Fe-2S]-[ferredoxin]. The protein operates within protein modification; protein lipoylation via endogenous pathway; protein N(6)-(lipoyl)lysine from octanoyl-[acyl-carrier-protein]: step 2/2. Its function is as follows. Catalyzes the radical-mediated insertion of two sulfur atoms into the C-6 and C-8 positions of the octanoyl moiety bound to the lipoyl domains of lipoate-dependent enzymes, thereby converting the octanoylated domains into lipoylated derivatives. In Ehrlichia canis (strain Jake), this protein is Lipoyl synthase.